The following is a 205-amino-acid chain: Type III pantothenate kinase (205 aa).

5 to 12 (DIGNTTYH) provides a ligand contact to ATP. Substrate-binding positions include Y68 and 72–75 (GIDR). D74 functions as the Proton acceptor in the catalytic mechanism. D89 lines the K(+) pocket. Residue S92 coordinates ATP. S144 contributes to the substrate binding site.

It belongs to the type III pantothenate kinase family. As to quaternary structure, homodimer. The cofactor is NH4(+). Requires K(+) as cofactor.

The protein localises to the cytoplasm. The enzyme catalyses (R)-pantothenate + ATP = (R)-4'-phosphopantothenate + ADP + H(+). Its pathway is cofactor biosynthesis; coenzyme A biosynthesis; CoA from (R)-pantothenate: step 1/5. Catalyzes the phosphorylation of pantothenate (Pan), the first step in CoA biosynthesis. The protein is Type III pantothenate kinase of Sulfurimonas denitrificans (strain ATCC 33889 / DSM 1251) (Thiomicrospira denitrificans (strain ATCC 33889 / DSM 1251)).